Consider the following 155-residue polypeptide: MTHPLIPQIIDLATPIAEKLGLEIVEVVFQTNKRPPVLRLDIRNLSSDTGLDDCEQMSRSLEATLDATELIPGSYVLEISSPGISRQLTSDREFIAFKGFEVIVKTYTPYENQKEWRGNLQGRDEQAVYLNKKGRAIAIPRQLVAKVQLNDQRTT.

The protein belongs to the RimP family.

Its subcellular location is the cytoplasm. Functionally, required for maturation of 30S ribosomal subunits. This is Ribosome maturation factor RimP from Gloeothece citriformis (strain PCC 7424) (Cyanothece sp. (strain PCC 7424)).